The sequence spans 530 residues: Arginine--tRNA ligase (530 aa).

The short motif at 113–123 (ANPTGPLHIGH) is the 'HIGH' region element.

This sequence belongs to the class-I aminoacyl-tRNA synthetase family. As to quaternary structure, monomer.

Its subcellular location is the cytoplasm. It carries out the reaction tRNA(Arg) + L-arginine + ATP = L-arginyl-tRNA(Arg) + AMP + diphosphate. This Campylobacter jejuni subsp. jejuni serotype O:6 (strain 81116 / NCTC 11828) protein is Arginine--tRNA ligase.